The following is a 67-amino-acid chain: UPF0337 protein msl9551 (67 aa).

Belongs to the UPF0337 (CsbD) family.

The sequence is that of UPF0337 protein msl9551 from Mesorhizobium japonicum (strain LMG 29417 / CECT 9101 / MAFF 303099) (Mesorhizobium loti (strain MAFF 303099)).